The primary structure comprises 252 residues: Putative pinene synthase (252 aa).

This sequence belongs to the terpene synthase family. Tpsa subfamily.

In Fragaria ananassa (Strawberry), this protein is Putative pinene synthase.